Consider the following 684-residue polypeptide: Poly(A) RNA polymerase cid14 (684 aa).

Disordered regions lie at residues M1–D52, D64–E127, and W161–E219. Composition is skewed to basic and acidic residues over residues E19–S35, G73–G91, D108–E127, S171–K186, and F199–N210. The Mg(2+) site is built by D298 and D300. Residues G364, K389, S407, Y408, N492, and K496 each contribute to the ATP site. The PAP-associated domain maps to N434–N492. The disordered stretch occupies residues G623–F684. Positions Q628 to S655 are enriched in polar residues. Over residues D656–D672 the composition is skewed to acidic residues.

The protein belongs to the DNA polymerase type-B-like family. In terms of assembly, heterooligomer. Component of the TRAMP complex composed of at least cid14, mtr4, and air1. Mg(2+) serves as cofactor. The cofactor is Mn(2+).

The protein localises to the nucleus. It is found in the nucleolus. It carries out the reaction RNA(n) + ATP = RNA(n)-3'-adenine ribonucleotide + diphosphate. Its function is as follows. Required for 3' polyadenylation of the 5.8S and 25S rRNAs as a prelude to their degradation in the exosome. Involved in the nucleolar organization to ensure faithful chromosome segregation during mitosis. The sequence is that of Poly(A) RNA polymerase cid14 (cid14) from Schizosaccharomyces pombe (strain 972 / ATCC 24843) (Fission yeast).